The primary structure comprises 270 residues: Cytochrome c oxidase subunit 3 (270 aa).

7 consecutive transmembrane segments (helical) span residues 22–42 (PWPI…GLTM), 46–66 (IGEM…GVLW), 88–108 (INIG…ALFW), 128–148 (VGIT…ILLA), 168–188 (SLSG…CQYI), 205–225 (VFFA…IMLA), and 248–268 (IIYL…FYWW).

This sequence belongs to the cytochrome c oxidase subunit 3 family. As to quaternary structure, component of the cytochrome c oxidase (complex IV, CIV), a multisubunit enzyme composed of a catalytic core of 3 subunits and several supernumerary subunits. The complex exists as a monomer or a dimer and forms supercomplexes (SCs) in the inner mitochondrial membrane with ubiquinol-cytochrome c oxidoreductase (cytochrome b-c1 complex, complex III, CIII).

The protein localises to the mitochondrion inner membrane. The catalysed reaction is 4 Fe(II)-[cytochrome c] + O2 + 8 H(+)(in) = 4 Fe(III)-[cytochrome c] + 2 H2O + 4 H(+)(out). In terms of biological role, component of the cytochrome c oxidase, the last enzyme in the mitochondrial electron transport chain which drives oxidative phosphorylation. The respiratory chain contains 3 multisubunit complexes succinate dehydrogenase (complex II, CII), ubiquinol-cytochrome c oxidoreductase (cytochrome b-c1 complex, complex III, CIII) and cytochrome c oxidase (complex IV, CIV), that cooperate to transfer electrons derived from NADH and succinate to molecular oxygen, creating an electrochemical gradient over the inner membrane that drives transmembrane transport and the ATP synthase. Cytochrome c oxidase is the component of the respiratory chain that catalyzes the reduction of oxygen to water. Electrons originating from reduced cytochrome c in the intermembrane space (IMS) are transferred via the dinuclear copper A center (CU(A)) of subunit 2 and heme A of subunit 1 to the active site in subunit 1, a binuclear center (BNC) formed by heme A3 and copper B (CU(B)). The BNC reduces molecular oxygen to 2 water molecules using 4 electrons from cytochrome c in the IMS and 4 protons from the mitochondrial matrix. This chain is Cytochrome c oxidase subunit 3 (COX3), found in Vanderwaltozyma polyspora (strain ATCC 22028 / DSM 70294 / BCRC 21397 / CBS 2163 / NBRC 10782 / NRRL Y-8283 / UCD 57-17) (Kluyveromyces polysporus).